The chain runs to 185 residues: Ribosome-recycling factor (185 aa).

This sequence belongs to the RRF family.

Its subcellular location is the cytoplasm. Functionally, responsible for the release of ribosomes from messenger RNA at the termination of protein biosynthesis. May increase the efficiency of translation by recycling ribosomes from one round of translation to another. In Aliivibrio salmonicida (strain LFI1238) (Vibrio salmonicida (strain LFI1238)), this protein is Ribosome-recycling factor.